Reading from the N-terminus, the 696-residue chain is SLIT and NTRK-like protein 1 (696 aa).

The first 17 residues, 1–17 (MLLWILLLETSLCFAAG), serve as a signal peptide directing secretion. The 40-residue stretch at 18–57 (NVTGDVCKEKICSCNEIEGDLHVDCEKKGFTSLQRFTAPT) folds into the LRRNT 1 domain. Residues 18–622 (NVTGDVCKEK…SRVSISVLVP (605 aa)) are Extracellular-facing. 6 LRR repeats span residues 59–80 (QFYH…EFAN), 83–104 (NAVS…AFLG), 106–128 (QLVK…TFLG), 131–152 (DLEY…AFQD), 155–176 (KLEV…VFQY), and 178–199 (PITH…EVLE). The 52-residue stretch at 212 to 263 (NPWDCTCDLLSLKEWLENIPKNALIGRVVCEAPTRLQGKDLNETTEQDLCPL) folds into the LRRCT 1 domain. Residues 265 to 314 (NRVDSSLPAPPAQEETFAPGPLPTPFKTNGQEDHATPGSAPNGGTKIPGN) form a disordered region. An LRRNT 2 domain is found at 332-373 (NKPLANSLPCPGGCSCDHIPGSGLKMNCNNRNVSSLADLKPK). LRR repeat units follow at residues 376-397 (NVQE…HFVD), 400-421 (NLIL…TFKN), 424-445 (DLRW…KFAG), 448-469 (NLEY…TFNA), 472-493 (KLRI…VFAG), and 495-516 (SLSK…GVLD). The 52-residue stretch at 529-580 (NPWECSCTIVPFKQWAERLGSEVLMSDLKCETPVNFFRKDFMLLSNDEICPQ) folds into the LRRCT 2 domain. Residues 623-643 (GLLLVFVTSAFTVVGMLVFIL) form a helical membrane-spanning segment. Residues 644–696 (RNRKRSKRRDANSSASEINSLQTVCDSSYWHNGPYNADGAHRVYDCGSHSLSD) are Cytoplasmic-facing. A Phosphoserine; by CK2 modification is found at serine 695.

It belongs to the SLITRK family. In terms of assembly, can form homodimers; homodimerization requires repeat LRR 2. Interacts with YWHAB, YWHAE, YWHAG, YWHAH, SFN, YWHAQ and YWHAZ. In terms of processing, undergoes proteolytic cleavage that results in shedding of the ectodomain and cleavage of the C-terminal cytoplasmic tail. Glycosylated. Phosphorylation at Ser-695 is necessary for proper function in promoting neurite outgrowth. In terms of tissue distribution, expressed predominantly in the frontal lobe of the cerebral cortex of the brain. Also expressed in some astrocytic brain tumors such as astrocytomas, oligodendrogliomas, glioblastomas, gangliogliomas and primitive neuroectodermal tumors.

The protein localises to the membrane. It is found in the secreted. The protein resides in the synapse. In terms of biological role, it is involved in synaptogenesis and promotes excitatory synapse differentiation. Enhances neuronal dendrite outgrowth. The sequence is that of SLIT and NTRK-like protein 1 (SLITRK1) from Homo sapiens (Human).